The sequence spans 509 residues: Probable cytochrome P450 4ac3 (509 aa).

Heme is bound at residue cysteine 454.

The protein belongs to the cytochrome P450 family. It depends on heme as a cofactor.

It is found in the endoplasmic reticulum membrane. It localises to the microsome membrane. May be involved in the metabolism of insect hormones and in the breakdown of synthetic insecticides. The chain is Probable cytochrome P450 4ac3 (Cyp4ac3) from Drosophila melanogaster (Fruit fly).